The chain runs to 247 residues: Flavin-dependent thymidylate synthase (247 aa).

One can recognise a ThyX domain in the interval 1-237 (MRVRLLEATE…PHTFEYYDAE (237 aa)). DUMP-binding positions include 85-88 (QLTR), 98-100 (SMR), and Arg-176. 88 to 90 (RHR) contacts FAD. Residues 88 to 98 (RHRHASFDVQS) carry the ThyX motif motif. FAD-binding positions include 192-194 (NPR) and His-198. Arg-203 provides a ligand contact to dUMP. The Involved in ionization of N3 of dUMP, leading to its activation role is filled by Arg-203.

This sequence belongs to the thymidylate synthase ThyX family. As to quaternary structure, homotetramer. The cofactor is FAD.

The enzyme catalyses dUMP + (6R)-5,10-methylene-5,6,7,8-tetrahydrofolate + NADPH + H(+) = dTMP + (6S)-5,6,7,8-tetrahydrofolate + NADP(+). The protein operates within pyrimidine metabolism; dTTP biosynthesis. In terms of biological role, catalyzes the reductive methylation of 2'-deoxyuridine-5'-monophosphate (dUMP) to 2'-deoxythymidine-5'-monophosphate (dTMP) while utilizing 5,10-methylenetetrahydrofolate (mTHF) as the methyl donor, and NADPH and FADH(2) as the reductant. The protein is Flavin-dependent thymidylate synthase of Halobacterium salinarum (strain ATCC 700922 / JCM 11081 / NRC-1) (Halobacterium halobium).